Consider the following 253-residue polypeptide: Toxin PezT (253 aa).

ATP is bound at residue 39 to 46 (GQSGAGKT). The active-site Proton acceptor is Asp66.

It belongs to the zeta toxin family. As to quaternary structure, forms a PezA(2)PezT(2) heterotetramer. The heterotetramer is much more stable than either of the proteins alone, and a specific mechanism may be necessary to liberate the toxin.

It catalyses the reaction UDP-N-acetyl-alpha-D-glucosamine + ATP = UDP-N-acetyl-alpha-D-glucosamine 3'-phosphate + ADP + H(+). In terms of biological role, toxic component of a type II toxin-antitoxin (TA) system. Phosphorylates UDP-N-acetyl-D-glucosamine (UNAG) on the 3'-hydroxyl group of the N-acetyl-D-glucosamine moiety, yielding UNAG-3P. UNAG-3P inhibits MurA, the first committed step in cell wall synthesis, which is then blocked. Upon expression in E.coli results in decreased cell growth and viability, followed 3 hours later by growth restoration; the toxic effect and phosphorylation of UNAG are neutralized by coexpression with cognate antitoxin PezA. A mutant lacking the last 11 residues is stably maintained in E.coli, unlike the wild-type which undergoes spontaneous mutation. Expression of the deletion mutant in rapidly growing liquid cultures leads to cell bulging, permeabilization and massive lysis by 1 hour. Cells that survive are not able to undergo cytokinesis. Expression in slowly growing cells leads to bulging but not lysis. Acts as a corepressor of its own operon with PezA; it is not clear if it binds DNA alone. This is Toxin PezT (pezT) from Streptococcus pneumoniae serotype 4 (strain ATCC BAA-334 / TIGR4).